Consider the following 66-residue polypeptide: Large ribosomal subunit protein bL35 (66 aa).

Basic residues predominate over residues 1–16; the sequence is MPKQKTHRASAKRFKR. Residues 1–21 are disordered; that stretch reads MPKQKTHRASAKRFKRTGSGG.

The protein belongs to the bacterial ribosomal protein bL35 family.

This chain is Large ribosomal subunit protein bL35, found in Streptococcus gordonii (strain Challis / ATCC 35105 / BCRC 15272 / CH1 / DL1 / V288).